The sequence spans 243 residues: HTH-type transcriptional regulator MlrA (243 aa).

The 70-residue stretch at 3–72 (LYTIGEVALL…VSKVKVLLSS (70 aa)) folds into the HTH merR-type domain. The H-T-H motif DNA-binding region spans 6 to 25 (IGEVALLCDINPVTLRAWQR).

Its function is as follows. Transcriptional activator of csgD, which is required for production of the curli (AgF). This Salmonella typhimurium (strain SL1344) protein is HTH-type transcriptional regulator MlrA.